The following is a 133-amino-acid chain: FPRL1 inhibitory protein (133 aa).

A signal peptide spans 1–28 (MKKNITKTIIASTVIAAGLLTQTNDAKA).

It belongs to the CHIPS/FLIPr family.

It localises to the secreted. Functionally, may be involved in countering the first line of host defense mechanisms. Impairs the leukocyte response to FPRL1 agonists by binding directly to host FPRL1. This Staphylococcus aureus (strain Mu50 / ATCC 700699) protein is FPRL1 inhibitory protein (flr).